The primary structure comprises 921 residues: Levanase (921 aa).

Residues 1 to 23 form the signal peptide; it reads MMKWFAKLILSLSLAVVMAASSA. Substrate-binding positions include 409–412, glutamine 428, 460–461, 539–540, glutamate 591, and tryptophan 679; these read SASD, WS, and RD. The active site involves aspartate 412.

Belongs to the glycosyl hydrolase 32 family.

The protein resides in the secreted. It carries out the reaction Random hydrolysis of (2-&gt;6)-beta-D-fructofuranosidic linkages in (2-&gt;6)-beta-D-fructans (levans) containing more than 3 fructose units.. With respect to regulation, is completely inhibited by low concentrations of heavy metal ions, while Ca(2+) and Mg(2+) or chelating agents such as EDTA neither inhibit nor activate the enzyme to any significant extent. Catalyzes the hydrolysis of levan with endo-type specificity. The products of levan hydrolysis are a mixture of fructose and a series of fructooligosaccharides up to 12-mer, with levantriose being the major oligosaccharide obtained. Is not active towards sucrose. The polypeptide is Levanase (Bacillus sp. (strain L7)).